A 368-amino-acid polypeptide reads, in one-letter code: MVVLGSTGSIGKNALKIAKKFGVKIEALSCGKNIALINEQIKVFKPKKVAILDPNDLNNLEPLGAEVFVGLDGIDAMIEECVSNLVINAIVGVAGLKASFKSLQRNKKLALANKESLVSAGHLLDISQITPVDSEHFGLWALLQNKTLKPKSLIISASGGAFRDTPLDLIAIQNAQNALKHPNWSMGDKITIDSASMVNKLFEILETYWLFGASLKIDALIERSSIVHALVEFEDNSVIAHLASADMQLPISYAINPKLASLSASIKPLDLYALSAIKFEPISVERYTLWRYKDLLLENPKLGVVLNASNEVAMKKFLNQEIAFGGFIQIISQALELYAKKSFKLSSLDEVLALDKEVRERFGSVARV.

The NADPH site is built by Thr7, Gly8, Ser9, Ile10, Gly31, Lys32, Asn33, and Asn113. Lys114 contacts 1-deoxy-D-xylulose 5-phosphate. Residue Glu115 participates in NADPH binding. Asp133 serves as a coordination point for Mn(2+). 4 residues coordinate 1-deoxy-D-xylulose 5-phosphate: Ser134, Glu135, Ser158, and His181. Glu135 serves as a coordination point for Mn(2+). Gly187 provides a ligand contact to NADPH. 1-deoxy-D-xylulose 5-phosphate-binding residues include Ser194, Asn199, Lys200, and Glu203. Residue Glu203 participates in Mn(2+) binding.

Belongs to the DXR family. Mg(2+) serves as cofactor. The cofactor is Mn(2+).

It carries out the reaction 2-C-methyl-D-erythritol 4-phosphate + NADP(+) = 1-deoxy-D-xylulose 5-phosphate + NADPH + H(+). Its pathway is isoprenoid biosynthesis; isopentenyl diphosphate biosynthesis via DXP pathway; isopentenyl diphosphate from 1-deoxy-D-xylulose 5-phosphate: step 1/6. Functionally, catalyzes the NADPH-dependent rearrangement and reduction of 1-deoxy-D-xylulose-5-phosphate (DXP) to 2-C-methyl-D-erythritol 4-phosphate (MEP). This Helicobacter pylori (strain J99 / ATCC 700824) (Campylobacter pylori J99) protein is 1-deoxy-D-xylulose 5-phosphate reductoisomerase.